The following is a 335-amino-acid chain: Putative serine/threonine-protein kinase 040L (335 aa).

In terms of domain architecture, Protein kinase spans Y33–L329. Residues H39 to I47 and K62 each bind ATP. The active-site Proton acceptor is D196.

This sequence belongs to the protein kinase superfamily. Ser/Thr protein kinase family.

The polypeptide is Putative serine/threonine-protein kinase 040L (Invertebrate iridescent virus 3 (IIV-3)).